We begin with the raw amino-acid sequence, 213 residues long: Small ribosomal subunit protein uS5 (213 aa).

In terms of domain architecture, S5 DRBM spans 54–117 (LKSETVDVRL…RNAKLNIIPV (64 aa)).

The protein belongs to the universal ribosomal protein uS5 family. Part of the 30S ribosomal subunit. Contacts protein S4.

Its function is as follows. With S4 and S12 plays an important role in translational accuracy. This chain is Small ribosomal subunit protein uS5, found in Hyperthermus butylicus (strain DSM 5456 / JCM 9403 / PLM1-5).